Here is a 419-residue protein sequence, read N- to C-terminus: F-box/FBD/LRR-repeat protein At4g26340 (419 aa).

The region spanning 1–53 (MDRISQLSDDLLLQILSFIPGKDVVATSLLSKRWQSLWMLVSELEYDDSYHTG) is the F-box domain. LRR repeat units lie at residues 55 to 81 (YKSFSQFVYRSLLSNNAPVIKHLHLNL), 132 to 159 (TLRLINFVLLDVPSSVCLPSLKVLHLKT), 160 to 185 (VDYEDDASLPSLLFGCPNLEELFVER), 187 to 208 (DQDLEMDVTFVVPSLRRLSMID), 226 to 253 (YLNITDDAVYDVRQIENMPELVEAHVDI), 254 to 284 (TQGVTHKFLRALTSVRQLSLCLSLSEVMCPS), and 299 to 324 (VVKGWWDLLTSMLQDSPKLQSLKLID). The FBD domain maps to 339–389 (GWKLPSSVPECLLFSLEAFEWIGYKGRRGDREVATYVLKNAACLRTAKFSP).

The protein is F-box/FBD/LRR-repeat protein At4g26340 of Arabidopsis thaliana (Mouse-ear cress).